Here is a 106-residue protein sequence, read N- to C-terminus: Iron-sulfur cluster assembly protein CyaY (106 aa).

The protein belongs to the frataxin family.

In terms of biological role, involved in iron-sulfur (Fe-S) cluster assembly. May act as a regulator of Fe-S biogenesis. In Photorhabdus laumondii subsp. laumondii (strain DSM 15139 / CIP 105565 / TT01) (Photorhabdus luminescens subsp. laumondii), this protein is Iron-sulfur cluster assembly protein CyaY.